Consider the following 163-residue polypeptide: Cyclic pyranopterin monophosphate synthase (163 aa).

Substrate is bound by residues 75–77 and 115–116; these read LCH and ME. Residue aspartate 130 is part of the active site.

Belongs to the MoaC family. In terms of assembly, homohexamer; trimer of dimers.

The enzyme catalyses (8S)-3',8-cyclo-7,8-dihydroguanosine 5'-triphosphate = cyclic pyranopterin phosphate + diphosphate. It participates in cofactor biosynthesis; molybdopterin biosynthesis. In terms of biological role, catalyzes the conversion of (8S)-3',8-cyclo-7,8-dihydroguanosine 5'-triphosphate to cyclic pyranopterin monophosphate (cPMP). This is Cyclic pyranopterin monophosphate synthase from Variovorax paradoxus (strain S110).